Here is a 235-residue protein sequence, read N- to C-terminus: Probable carboxylesterase Os04g0669600 (235 aa).

Catalysis depends on charge relay system residues Ser113, Asp167, and His199.

It belongs to the AB hydrolase superfamily. AB hydrolase 2 family.

Possesses carboxylesterase activity in vitro. The protein is Probable carboxylesterase Os04g0669600 of Oryza sativa subsp. japonica (Rice).